Here is a 414-residue protein sequence, read N- to C-terminus: Esterase FrsA (414 aa).

The protein belongs to the FrsA family.

The catalysed reaction is a carboxylic ester + H2O = an alcohol + a carboxylate + H(+). In terms of biological role, catalyzes the hydrolysis of esters. The chain is Esterase FrsA from Shigella flexneri serotype 5b (strain 8401).